The primary structure comprises 158 residues: SsrA-binding protein (158 aa).

Residues 133–147 are compositionally biased toward basic and acidic residues; that stretch reads KRQALRERQDNREAQ. Positions 133 to 158 are disordered; the sequence is KRQALRERQDNREAQRAMASRKHLGE.

This sequence belongs to the SmpB family.

It localises to the cytoplasm. Required for rescue of stalled ribosomes mediated by trans-translation. Binds to transfer-messenger RNA (tmRNA), required for stable association of tmRNA with ribosomes. tmRNA and SmpB together mimic tRNA shape, replacing the anticodon stem-loop with SmpB. tmRNA is encoded by the ssrA gene; the 2 termini fold to resemble tRNA(Ala) and it encodes a 'tag peptide', a short internal open reading frame. During trans-translation Ala-aminoacylated tmRNA acts like a tRNA, entering the A-site of stalled ribosomes, displacing the stalled mRNA. The ribosome then switches to translate the ORF on the tmRNA; the nascent peptide is terminated with the 'tag peptide' encoded by the tmRNA and targeted for degradation. The ribosome is freed to recommence translation, which seems to be the essential function of trans-translation. This is SsrA-binding protein from Leifsonia xyli subsp. xyli (strain CTCB07).